Consider the following 258-residue polypeptide: Aquaporin PIP1-2 (258 aa).

The disordered stretch occupies residues 1–37; it reads MEGKEEDVRLGANKFTERQPIGTAAQSQDKDYKEPPP. The Cytoplasmic segment spans residues 1–55; sequence MEGKEEDVRLGANKFTERQPIGTAAQSQDKDYKEPPPAPLFEPGELSSWSFYRAG. The helical transmembrane segment at 56–76 threads the bilayer; the sequence is IAEFVATFLFLYITILTVMGV. Topologically, residues 77–89 are extracellular; the sequence is VKSSTKCSTVGIQ. The chain crosses the membrane as a helical span at residues 90–110; sequence GIAWAFGGMIFALVYCTAGIS. Topologically, residues 111-133 are cytoplasmic; the sequence is GGHINPAVTFGLFLARKLSLTRA. Positions 115–117 match the NPA 1 motif; the sequence is NPA. Residues 134–154 traverse the membrane as a helical segment; it reads LFYMVMQCLGAICGAGVVKGF. Residues 155 to 175 lie on the Extracellular side of the membrane; the sequence is QKGLYENNGGGANVVAPGYTK. A helical membrane pass occupies residues 176-196; that stretch reads GDGLGAEIVGTFILVYTVFSA. Over 197-209 the chain is Cytoplasmic; sequence TDAKRSARDSHVP. The chain crosses the membrane as a helical span at residues 210-230; the sequence is ILAPLPIGFAVFLVHLATIPI. Residues 231-258 lie on the Extracellular side of the membrane; it reads TGTGINPARSLGAAIIYNKGHAWDDHWI. The short motif at 236–238 is the NPA 2 element; that stretch reads NPA.

Belongs to the MIP/aquaporin (TC 1.A.8) family. PIP (TC 1.A.8.11) subfamily. As to expression, barely detectable in roots, leaves and fruits.

It localises to the cell membrane. Its function is as follows. Water channel required to facilitate the transport of water across cell membrane; mercury-insensitive. Contributes to the tolerance to multiple abiotic stresses including salt (NaCl), cold and water deprivation, by modulating cytosolic K(+)/Na(+) ratio, maintaining osmotic balance, and reducing membrane injury (e.g. oxidative injury). The protein is Aquaporin PIP1-2 of Musa acuminata (Banana).